The primary structure comprises 581 residues: Frizzled-10 (581 aa).

An N-terminal signal peptide occupies residues 1 to 20 (MQRPGPRLWLVLQVMGSCAA). The Extracellular segment spans residues 21-225 (ISSMDMERPG…DVYWSREDKR (205 aa)). Residues 29 to 150 (PGDGKCQPIE…NDPNYLCMEA (122 aa)) enclose the FZ domain. Intrachain disulfides connect Cys34-Cys95, Cys42-Cys88, Cys79-Cys117, Cys106-Cys147, and Cys110-Cys134. An N-linked (GlcNAc...) asparagine glycan is attached at Asn48. Asn153 is a glycosylation site (N-linked (GlcNAc...) asparagine). Residues 226-246 (FAVVWLAIWAVLCFFSSAFTV) traverse the membrane as a helical segment. The Cytoplasmic segment spans residues 247–262 (LTFLIDPARFRYPERP). A helical transmembrane segment spans residues 263 to 283 (IIFLSMCYCVYSVGYLIRLFA). Over 284–311 (GAESIACDRDSGQLYVIQEGLESTGCTL) the chain is Extracellular. Residues 312–332 (VFLVLYYFGMASSLWWVVLTL) form a helical membrane-spanning segment. The Cytoplasmic segment spans residues 333–351 (TWFLAAGKKWGHEAIEANS). Residues 352–372 (SYFHLAAWAIPAVKTILILVM) form a helical membrane-spanning segment. Over 373 to 393 (RRVAGDELTGVCYVGSMDVNA) the chain is Extracellular. A helical membrane pass occupies residues 394–414 (LTGFVLIPLACYLVIGTSFIL). The Cytoplasmic portion of the chain corresponds to 415-443 (SGFVALFHIRRVMKTGGENTDKLEKLMVR). A helical transmembrane segment spans residues 444–464 (IGLFSVLYTVPATCVIACYFY). Residues 465–502 (ERLNMDYWKILAAQHKCKMNNQTKTLDCLMAASIPAVE) lie on the Extracellular side of the membrane. N-linked (GlcNAc...) asparagine glycosylation is present at Asn485. The helical transmembrane segment at 503–523 (IFMVKIFMLLVVGITSGMWIW) threads the bilayer. Over 524-581 (TSKTLQSWQQVCSRRLKKKSRRKPASVITSGGIYKKAQHPQKTHHGKYEIPAQSPTCV) the chain is Cytoplasmic. Residues 526–531 (KTLQSW) carry the Lys-Thr-X-X-X-Trp motif, mediates interaction with the PDZ domain of Dvl family members motif. The interval 560 to 581 (AQHPQKTHHGKYEIPAQSPTCV) is disordered. Residues 579–581 (TCV) carry the PDZ-binding motif.

The protein belongs to the G-protein coupled receptor Fz/Smo family. As to quaternary structure, interacts with WNT7B. Interacts with MYOC. Post-translationally, ubiquitinated by ZNRF3, leading to its degradation by the proteasome. In terms of tissue distribution, highest levels in the placenta and fetal kidney, followed by fetal lung and brain. In adult brain, abundantly expressed in the cerebellum, followed by cerebral cortex, medulla and spinal cord; very low levels in total brain, frontal lobe, temporal lobe and putamen. Weak expression detected in adult brain, heart, lung, skeletal muscle, pancreas, spleen and prostate.

It localises to the cell membrane. In terms of biological role, receptor for Wnt proteins. Functions in the canonical Wnt/beta-catenin signaling pathway. The canonical Wnt/beta-catenin signaling pathway leads to the activation of disheveled proteins, inhibition of GSK-3 kinase, nuclear accumulation of beta-catenin and activation of Wnt target genes. A second signaling pathway involving PKC and calcium fluxes has been seen for some family members, but it is not yet clear if it represents a distinct pathway or if it can be integrated in the canonical pathway, as PKC seems to be required for Wnt-mediated inactivation of GSK-3 kinase. Both pathways seem to involve interactions with G-proteins. May be involved in transduction and intercellular transmission of polarity information during tissue morphogenesis and/or in differentiated tissues. This Homo sapiens (Human) protein is Frizzled-10 (FZD10).